The following is a 448-amino-acid chain: Glutamyl-tRNA reductase (448 aa).

Residues 49 to 52 (TCNR), serine 109, 114 to 116 (ETQ), and glutamine 120 each bind substrate. Cysteine 50 serves as the catalytic Nucleophile. 189-194 (GAGEMG) contacts NADP(+).

This sequence belongs to the glutamyl-tRNA reductase family. Homodimer.

The catalysed reaction is (S)-4-amino-5-oxopentanoate + tRNA(Glu) + NADP(+) = L-glutamyl-tRNA(Glu) + NADPH + H(+). Its pathway is porphyrin-containing compound metabolism; protoporphyrin-IX biosynthesis; 5-aminolevulinate from L-glutamyl-tRNA(Glu): step 1/2. Functionally, catalyzes the NADPH-dependent reduction of glutamyl-tRNA(Glu) to glutamate 1-semialdehyde (GSA). This Staphylococcus epidermidis (strain ATCC 35984 / DSM 28319 / BCRC 17069 / CCUG 31568 / BM 3577 / RP62A) protein is Glutamyl-tRNA reductase.